Consider the following 711-residue polypeptide: Serine/threonine-protein kinase ATG1b (711 aa).

The 258-residue stretch at 20-277 folds into the Protein kinase domain; it reads YAVGRQIGSG…FEEFFHHPFL (258 aa). ATP-binding positions include 26–34 and Lys49; that span reads IGSGSFSVV. Asp142 (proton acceptor) is an active-site residue. 2 disordered regions span residues 318–342 and 383–419; these read LPFFLDDDSSGPEGSPSSFKHTSPM and FEGHRLSDRSQFKPSSLPDSRSFSTQGRGDSPDSMDQ. The span at 383 to 393 shows a compositional bias: basic and acidic residues; sequence FEGHRLSDRSQ. The segment covering 394 to 410 has biased composition (polar residues); sequence FKPSSLPDSRSFSTQGR. Residues 421 to 424 carry the AIM (Atg8-family-interacting motif) motif; the sequence is YVLI.

This sequence belongs to the protein kinase superfamily. Ser/Thr protein kinase family.

It is found in the cytoplasmic vesicle. The protein resides in the autophagosome. Functionally, serine/threonine protein kinase involved in autophagy. The ATG1-ATG13 protein kinase complex regulates downstream events required for autophagosome enclosure and/or vacuolar delivery. The protein is Serine/threonine-protein kinase ATG1b of Arabidopsis thaliana (Mouse-ear cress).